We begin with the raw amino-acid sequence, 163 residues long: Anaerobic nitrite reductase HB1 (163 aa).

The 150-residue stretch at Val8–Lys157 folds into the Globin domain. The Homodimerization motif lies at Glu41–Ser45. Heme b is bound by residues Ser51, Lys65, His69, Lys99, Thr103, and His104. Positions Asp111–Glu123 match the Homodimerization motif.

This sequence belongs to the plant globin family. In terms of assembly, homodimer. Heme b is required as a cofactor.

It localises to the cytoplasm. It is found in the nucleus. The catalysed reaction is Fe(III)-heme b-[protein] + nitric oxide + H2O = Fe(II)-heme b-[protein] + nitrite + 2 H(+). In terms of biological role, phytoglobin that reduces nitrite to nitric oxide (NO) under anoxic conditions (e.g. during flooding or in waterlogged soil). May not function as an oxygen storage or transport protein. Has an unusually high affinity for O(2) through an hexacoordinate heme iron because of a very low dissociation constant. The protein is Anaerobic nitrite reductase HB1 of Gossypium hirsutum (Upland cotton).